Reading from the N-terminus, the 174-residue chain is Large ribosomal subunit protein uL10 (174 aa).

This sequence belongs to the universal ribosomal protein uL10 family. Part of the ribosomal stalk of the 50S ribosomal subunit. The N-terminus interacts with L11 and the large rRNA to form the base of the stalk. The C-terminus forms an elongated spine to which L12 dimers bind in a sequential fashion forming a multimeric L10(L12)X complex.

Forms part of the ribosomal stalk, playing a central role in the interaction of the ribosome with GTP-bound translation factors. The sequence is that of Large ribosomal subunit protein uL10 from Anaeromyxobacter dehalogenans (strain 2CP-1 / ATCC BAA-258).